Consider the following 224-residue polypeptide: Urease accessory protein UreF (224 aa).

Belongs to the UreF family. As to quaternary structure, ureD, UreF and UreG form a complex that acts as a GTP-hydrolysis-dependent molecular chaperone, activating the urease apoprotein by helping to assemble the nickel containing metallocenter of UreC. The UreE protein probably delivers the nickel.

The protein localises to the cytoplasm. Required for maturation of urease via the functional incorporation of the urease nickel metallocenter. The sequence is that of Urease accessory protein UreF from Pseudomonas fluorescens (strain ATCC BAA-477 / NRRL B-23932 / Pf-5).